Reading from the N-terminus, the 258-residue chain is Cyclohexa-1,5-dienecarbonyl-CoA hydratase (258 aa).

The protein belongs to the enoyl-CoA hydratase/isomerase family.

It catalyses the reaction cyclohexa-1,5-diene-1-carbonyl-CoA + H2O = 6-hydroxycyclohex-1-ene-1-carbonyl-CoA. The protein operates within aromatic compound metabolism; benzoyl-CoA degradation. Its function is as follows. Catalyzes the hydration of cyclohexa-1,5-diene-1-carboxyl-CoA. The sequence is that of Cyclohexa-1,5-dienecarbonyl-CoA hydratase (dch) from Thauera aromatica.